A 490-amino-acid polypeptide reads, in one-letter code: Trigger factor (490 aa).

The region spanning 161-247 (GDQVIVDIEA…VHEVKEAELP (87 aa)) is the PPIase FKBP-type domain. Residues 441 to 460 (AEPAEGTEPAAEEAVTAPEV) show a composition bias toward low complexity. Residues 441-490 (AEPAEGTEPAAEEAVTAPEVVDGETTPASESAESLAVTETGSRADDDQAS) are disordered. Residues 466 to 481 (TPASESAESLAVTETG) are compositionally biased toward polar residues.

The protein belongs to the FKBP-type PPIase family. Tig subfamily.

The protein resides in the cytoplasm. The enzyme catalyses [protein]-peptidylproline (omega=180) = [protein]-peptidylproline (omega=0). Functionally, involved in protein export. Acts as a chaperone by maintaining the newly synthesized protein in an open conformation. Functions as a peptidyl-prolyl cis-trans isomerase. The polypeptide is Trigger factor (Thermomicrobium roseum (strain ATCC 27502 / DSM 5159 / P-2)).